We begin with the raw amino-acid sequence, 88 residues long: Cell division topological specificity factor (88 aa).

The protein belongs to the MinE family.

Its function is as follows. Prevents the cell division inhibition by proteins MinC and MinD at internal division sites while permitting inhibition at polar sites. This ensures cell division at the proper site by restricting the formation of a division septum at the midpoint of the long axis of the cell. The protein is Cell division topological specificity factor of Citrobacter koseri (strain ATCC BAA-895 / CDC 4225-83 / SGSC4696).